The following is a 395-amino-acid chain: S-adenosylmethionine synthase (395 aa).

His-16 lines the ATP pocket. Position 18 (Asp-18) interacts with Mg(2+). Glu-44 lines the K(+) pocket. 2 residues coordinate L-methionine: Glu-57 and Gln-100. The flexible loop stretch occupies residues 100 to 110 (QSTDIAQGVNE). ATP is bound by residues 174–176 (DAK), 241–242 (RF), Asp-250, 256–257 (RK), Ala-273, and Lys-277. Asp-250 contributes to the L-methionine binding site. An L-methionine-binding site is contributed by Lys-281.

The protein belongs to the AdoMet synthase family. In terms of assembly, homotetramer; dimer of dimers. Mg(2+) is required as a cofactor. The cofactor is K(+).

The protein localises to the cytoplasm. It catalyses the reaction L-methionine + ATP + H2O = S-adenosyl-L-methionine + phosphate + diphosphate. The protein operates within amino-acid biosynthesis; S-adenosyl-L-methionine biosynthesis; S-adenosyl-L-methionine from L-methionine: step 1/1. In terms of biological role, catalyzes the formation of S-adenosylmethionine (AdoMet) from methionine and ATP. The overall synthetic reaction is composed of two sequential steps, AdoMet formation and the subsequent tripolyphosphate hydrolysis which occurs prior to release of AdoMet from the enzyme. This is S-adenosylmethionine synthase from Streptococcus uberis (strain ATCC BAA-854 / 0140J).